We begin with the raw amino-acid sequence, 626 residues long: ATP-dependent RNA helicase cyt-19, mitochondrial (626 aa).

The Q motif signature appears at 74-103 (ADLAALGVHENVVRAITHGMGYENMTEVQS). The Helicase ATP-binding domain occupies 106–297 (ISPALKGKDI…RSYIDKNNFE (192 aa)). 119–126 (AKTGTGKT) contributes to the ATP binding site. Positions 241-244 (DEAD) match the DEAD box motif. Positions 329–493 (AMLELIEKAL…CASVNAADSG (165 aa)) constitute a Helicase C-terminal domain. Residues 569–626 (LRVETREHSMRPMGSGPGHRRDFNSRGPRRQSDDPFENALHRAQDLDRRPTRRQQASF) are disordered. Residues 578–626 (MRPMGSGPGHRRDFNSRGPRRQSDDPFENALHRAQDLDRRPTRRQQASF) form an RNA-binding region. Residues 607–617 (ALHRAQDLDRR) show a composition bias toward basic and acidic residues.

The protein belongs to the DEAD box helicase family.

Its subcellular location is the mitochondrion matrix. It carries out the reaction ATP + H2O = ADP + phosphate + H(+). Its activity is regulated as follows. Activated by exposed helices in a group I intron RNA. Acts as an RNA chaperone to resolve non-native structures formed during RNA folding to promote mitochondrial group I, but also group II, intron splicing. Functions predominantly by disrupting accessible RNA secondary structure and depends on spontaneous openings in tightly packed RNAs to gain access to RNA helices. The chain is ATP-dependent RNA helicase cyt-19, mitochondrial from Neurospora crassa (strain ATCC 24698 / 74-OR23-1A / CBS 708.71 / DSM 1257 / FGSC 987).